We begin with the raw amino-acid sequence, 263 residues long: Small ribosomal subunit protein eS4, X isoform (263 aa).

The 63-residue stretch at 42–104 (LPLIIFLRNR…TGEHFRLVYD (63 aa)) folds into the S4 RNA-binding domain. Residue lysine 230 forms a Glycyl lysine isopeptide (Lys-Gly) (interchain with G-Cter in SUMO2) linkage. Residue lysine 233 is modified to N6-acetyllysine.

This sequence belongs to the eukaryotic ribosomal protein eS4 family. Component of the small ribosomal subunit. Part of the small subunit (SSU) processome, composed of more than 70 proteins and the RNA chaperone small nucleolar RNA (snoRNA) U3. Identified in a IGF2BP1-dependent mRNP granule complex containing untranslated mRNAs.

It localises to the cytoplasm. It is found in the nucleus. The protein resides in the nucleolus. Component of the small ribosomal subunit. The ribosome is a large ribonucleoprotein complex responsible for the synthesis of proteins in the cell. Part of the small subunit (SSU) processome, first precursor of the small eukaryotic ribosomal subunit. During the assembly of the SSU processome in the nucleolus, many ribosome biogenesis factors, an RNA chaperone and ribosomal proteins associate with the nascent pre-rRNA and work in concert to generate RNA folding, modifications, rearrangements and cleavage as well as targeted degradation of pre-ribosomal RNA by the RNA exosome. The polypeptide is Small ribosomal subunit protein eS4, X isoform (RPS4X) (Monodelphis domestica (Gray short-tailed opossum)).